A 244-amino-acid chain; its full sequence is 5-oxoprolinase subunit A (244 aa).

This sequence belongs to the LamB/PxpA family. Forms a complex composed of PxpA, PxpB and PxpC.

It catalyses the reaction 5-oxo-L-proline + ATP + 2 H2O = L-glutamate + ADP + phosphate + H(+). In terms of biological role, catalyzes the cleavage of 5-oxoproline to form L-glutamate coupled to the hydrolysis of ATP to ADP and inorganic phosphate. This chain is 5-oxoprolinase subunit A, found in Shigella boydii serotype 18 (strain CDC 3083-94 / BS512).